The following is a 93-amino-acid chain: MDGIKYAVFTEKSIRLLGKNQYTSNVESGSTRTEIKHWVELFFGVKVIAMNSHRLPGKGRRMGPIMGHTMHYRRMIITLQPGYSIPPLRKKRT.

It belongs to the universal ribosomal protein uL23 family. As to quaternary structure, part of the 50S ribosomal subunit.

It is found in the plastid. The protein resides in the chloroplast. Functionally, binds to 23S rRNA. In Jasminum nudiflorum (Winter jasmine), this protein is Large ribosomal subunit protein uL23cz/uL23cy (rpl23-A).